Reading from the N-terminus, the 268-residue chain is Putative hydro-lyase ABSDF2257 (268 aa).

Belongs to the D-glutamate cyclase family.

This Acinetobacter baumannii (strain SDF) protein is Putative hydro-lyase ABSDF2257.